Reading from the N-terminus, the 219-residue chain is Small ribosomal subunit protein uS3 (219 aa).

The region spanning 38-107 (IREYIENKMK…RVHINVVEVK (70 aa)) is the KH type-2 domain.

Belongs to the universal ribosomal protein uS3 family. Part of the 30S ribosomal subunit. Forms a tight complex with proteins S10 and S14.

Its function is as follows. Binds the lower part of the 30S subunit head. Binds mRNA in the 70S ribosome, positioning it for translation. This Exiguobacterium sp. (strain ATCC BAA-1283 / AT1b) protein is Small ribosomal subunit protein uS3.